We begin with the raw amino-acid sequence, 377 residues long: tRNA-queuosine alpha-mannosyltransferase (377 aa).

This sequence belongs to the glycosyltransferase group 1 family. Glycosyltransferase 4 subfamily.

It carries out the reaction queuosine(34) in tRNA(Asp) + GDP-alpha-D-mannose = O-4''-alpha-D-mannosylqueuosine(34) in tRNA(Asp) + GDP + H(+). Its function is as follows. Glycosyltransferase that specifically catalyzes mannosylation of cytoplasmic tRNA(Asp) modified with queuosine at position 34 (queuosine(34)). Mannosylates the cyclopentene moiety of queuosine(34) in tRNA(Asp) to form mannosyl-queuosine(34). The polypeptide is tRNA-queuosine alpha-mannosyltransferase (Drosophila melanogaster (Fruit fly)).